We begin with the raw amino-acid sequence, 88 residues long: Yop proteins translocation protein S (88 aa).

2 consecutive transmembrane segments (helical) span residues 15–35 and 49–69; these read WLVL…GTLV and LGFV…ASWL.

It belongs to the FliQ/MopD/SpaQ family.

The protein resides in the cell membrane. In terms of biological role, component of the Yop secretion machinery. The polypeptide is Yop proteins translocation protein S (yscS) (Yersinia pestis).